The sequence spans 317 residues: tRNA N6-adenosine threonylcarbamoyltransferase (317 aa).

Fe cation contacts are provided by His-110 and His-114. Residues 132–136 (VVSGG), Asp-165, Gly-178, Asp-182, and Asn-271 each bind substrate. Asp-300 is a binding site for Fe cation.

This sequence belongs to the KAE1 / TsaD family. Fe(2+) is required as a cofactor.

It is found in the cytoplasm. The catalysed reaction is L-threonylcarbamoyladenylate + adenosine(37) in tRNA = N(6)-L-threonylcarbamoyladenosine(37) in tRNA + AMP + H(+). In terms of biological role, required for the formation of a threonylcarbamoyl group on adenosine at position 37 (t(6)A37) in tRNAs that read codons beginning with adenine. Is involved in the transfer of the threonylcarbamoyl moiety of threonylcarbamoyl-AMP (TC-AMP) to the N6 group of A37, together with TsaE and TsaB. TsaD likely plays a direct catalytic role in this reaction. The chain is tRNA N6-adenosine threonylcarbamoyltransferase from Mesoplasma florum (strain ATCC 33453 / NBRC 100688 / NCTC 11704 / L1) (Acholeplasma florum).